Reading from the N-terminus, the 695-residue chain is NADPH--cytochrome P450 reductase (695 aa).

Residues 1 to 8 lie on the Lumenal side of the membrane; it reads MAQLDTLD. Residues 9-31 traverse the membrane as a helical segment; that stretch reads LVVLVVLLVGSAAYFTKGTYWAV. The Cytoplasmic portion of the chain corresponds to 32 to 695; it reads PKDPYAASGP…SGSYQEDVWS (664 aa). Residues 66–221 form the Flavodoxin-like domain; sequence CVIFYGSQTG…DFLAWKEPMW (156 aa). FMN contacts are provided by residues 72-77, 123-126, 169-178, and Asp204; these read SQTGTA, ATYG, and LGNNTYEHYQ. Positions 277-538 constitute an FAD-binding FR-type domain; it reads HNPFIAPIVE…HVRHSNFKLP (262 aa). Arg296 is a binding site for NADP(+). FAD-binding positions include 451–454, 469–471, and 486–489; these read RYYS, TAV, and GVTT. NADP(+) contacts are provided by residues Thr552, 614–615, 620–624, and Glu656; these read SR and KVYVQ. Trp694 is an FAD binding site.

Belongs to the NADPH--cytochrome P450 reductase family. It in the N-terminal section; belongs to the flavodoxin family. This sequence in the C-terminal section; belongs to the flavoprotein pyridine nucleotide cytochrome reductase family. It depends on FAD as a cofactor. FMN is required as a cofactor.

The protein localises to the endoplasmic reticulum membrane. The protein resides in the mitochondrion outer membrane. Its subcellular location is the cell membrane. The catalysed reaction is 2 oxidized [cytochrome P450] + NADPH = 2 reduced [cytochrome P450] + NADP(+) + H(+). In terms of biological role, this enzyme is required for electron transfer from NADP to cytochrome P450 in microsomes. It can also provide electron transfer to heme oxygenase and cytochrome B5. Involved in ergosterol biosynthesis. This is NADPH--cytochrome P450 reductase from Aspergillus terreus (strain NIH 2624 / FGSC A1156).